The following is a 329-amino-acid chain: Glycerol-3-phosphate dehydrogenase [NAD(P)+] (329 aa).

Ser13, Trp14, His34, and Lys105 together coordinate NADPH. 3 residues coordinate sn-glycerol 3-phosphate: Lys105, Gly134, and Ser136. Ala138 contributes to the NADPH binding site. 5 residues coordinate sn-glycerol 3-phosphate: Lys189, Asp242, Ser252, Arg253, and Asn254. The active-site Proton acceptor is Lys189. Residue Arg253 coordinates NADPH. 2 residues coordinate NADPH: Val277 and Glu279.

Belongs to the NAD-dependent glycerol-3-phosphate dehydrogenase family.

The protein localises to the cytoplasm. It catalyses the reaction sn-glycerol 3-phosphate + NAD(+) = dihydroxyacetone phosphate + NADH + H(+). It carries out the reaction sn-glycerol 3-phosphate + NADP(+) = dihydroxyacetone phosphate + NADPH + H(+). It functions in the pathway membrane lipid metabolism; glycerophospholipid metabolism. Functionally, catalyzes the reduction of the glycolytic intermediate dihydroxyacetone phosphate (DHAP) to sn-glycerol 3-phosphate (G3P), the key precursor for phospholipid synthesis. This chain is Glycerol-3-phosphate dehydrogenase [NAD(P)+], found in Legionella pneumophila subsp. pneumophila (strain Philadelphia 1 / ATCC 33152 / DSM 7513).